We begin with the raw amino-acid sequence, 221 residues long: Ribosomal RNA small subunit methyltransferase G (221 aa).

The S-adenosyl-L-methionine site is built by G78, F83, and R150.

It belongs to the methyltransferase superfamily. RNA methyltransferase RsmG family.

Its subcellular location is the cytoplasm. Functionally, specifically methylates the N7 position of a guanine in 16S rRNA. The sequence is that of Ribosomal RNA small subunit methyltransferase G from Bifidobacterium longum (strain DJO10A).